Consider the following 420-residue polypeptide: Bicoumarin synthase ktnC (420 aa).

Cys-362 contributes to the heme binding site.

The protein belongs to the cytochrome P450 family. Requires heme as cofactor.

It carries out the reaction 2 7-demethylsiderin + NADPH + O2 = orlandin + NADP(+) + 2 H2O. It functions in the pathway secondary metabolite biosynthesis. Its function is as follows. Non-reducing polyketide synthase; part of the gene cluster that mediates the biosynthesis of the bicoumarin kotanin. The non-reducing polyketide synthase ktnS first catalyzes the formation of the pentaketidic 4,7-dihydroxy-5-methylcoumarin from acetyl coenzyme A and 4 malonyl coenzyme A molecules. Further O-methylation by ktnB leads to the formation of 7-demethylsiderin. Then, an oxidative phenol coupling catalyzed by the cytochrome P450 monooxygenase ktnC forms the 8,8'-dimer P-orlandin via dimerization the monomeric precursor, 7-demethylsiderin. P-orlandin is subsequently O-methylated in a stepwise fashion to demethylkotanin and kotanin. The polypeptide is Bicoumarin synthase ktnC (Aspergillus niger (strain ATCC MYA-4892 / CBS 513.88 / FGSC A1513)).